A 64-amino-acid chain; its full sequence is Large ribosomal subunit protein bL35 (64 aa).

Basic residues predominate over residues 1–22 (MPKMKSHTGMGKRVRVTGKGKI). Positions 1 to 28 (MPKMKSHTGMGKRVRVTGKGKIVKQQAG) are disordered.

This sequence belongs to the bacterial ribosomal protein bL35 family.

The protein is Large ribosomal subunit protein bL35 of Salinispora tropica (strain ATCC BAA-916 / DSM 44818 / JCM 13857 / NBRC 105044 / CNB-440).